Here is a 109-residue protein sequence, read N- to C-terminus: Iron-sulfur cluster assembly protein CyaY (109 aa).

This sequence belongs to the frataxin family.

Involved in iron-sulfur (Fe-S) cluster assembly. May act as a regulator of Fe-S biogenesis. The protein is Iron-sulfur cluster assembly protein CyaY of Bordetella bronchiseptica (strain ATCC BAA-588 / NCTC 13252 / RB50) (Alcaligenes bronchisepticus).